Reading from the N-terminus, the 197-residue chain is Phospholipid hydroperoxide glutathione peroxidase (197 aa).

Phosphoserine is present on S40. U73 is a catalytic residue. U73 is a non-standard amino acid (selenocysteine). At V78 the chain carries Phosphoserine.

The protein belongs to the glutathione peroxidase family. Monomer. Has a tendency to form higher mass oligomers. Interacts with FUNDC1; this interaction promotes GPX4 recruitment into mitochondria through TOM/TIM complex where it is degraded by mitophagy. Present primarily in testis. Expressed in flagella of epididymal sperm. Isoform Cytoplasmic: Highly expressed in testis. Present in spermatogonia, spermatocyte and spermatid (at protein level).

The protein resides in the nucleus. Its subcellular location is the nucleolus. It localises to the mitochondrion. It is found in the cytoplasm. It carries out the reaction a hydroperoxy polyunsaturated fatty acid + 2 glutathione = a hydroxy polyunsaturated fatty acid + glutathione disulfide + H2O. The enzyme catalyses 2 glutathione + H2O2 = glutathione disulfide + 2 H2O. It catalyses the reaction tert-butyl hydroperoxide + 2 glutathione = tert-butanol + glutathione disulfide + H2O. The catalysed reaction is cumene hydroperoxide + 2 glutathione = 2-phenylpropan-2-ol + glutathione disulfide + H2O. It carries out the reaction (9S)-hydroperoxy-(10E,12Z)-octadecadienoate + 2 glutathione = (9S)-hydroxy-(10E,12Z)-octadecadienoate + glutathione disulfide + H2O. The enzyme catalyses (13S)-hydroperoxy-(9Z,11E)-octadecadienoate + 2 glutathione = (13S)-hydroxy-(9Z,11E)-octadecadienoate + glutathione disulfide + H2O. It catalyses the reaction (5S)-hydroperoxy-(6E,8Z,11Z,14Z)-eicosatetraenoate + 2 glutathione = (5S)-hydroxy-(6E,8Z,11Z,14Z)-eicosatetraenoate + glutathione disulfide + H2O. The catalysed reaction is (12R)-hydroperoxy-(5Z,8Z,10E,14Z)-eicosatetraenoate + 2 glutathione = (12R)-hydroxy-(5Z,8Z,10E,14Z)-eicosatetraenoate + glutathione disulfide + H2O. It carries out the reaction (12S)-hydroperoxy-(5Z,8Z,10E,14Z)-eicosatetraenoate + 2 glutathione = (12S)-hydroxy-(5Z,8Z,10E,14Z)-eicosatetraenoate + glutathione disulfide + H2O. The enzyme catalyses (15S)-hydroperoxy-(5Z,8Z,11Z,13E)-eicosatetraenoate + 2 glutathione = (15S)-hydroxy-(5Z,8Z,11Z,13E)-eicosatetraenoate + glutathione disulfide + H2O. It catalyses the reaction (5S)-hydroperoxy-(6E,8Z,11Z,14Z,17Z)-eicosapentaenoate + 2 glutathione = (5S)-hydroxy-(6E,8Z,11Z,14Z,17Z)-eicosapentaenoate + glutathione disulfide + H2O. The catalysed reaction is (12S)-hydroperoxy-(5Z,8Z,10E,14Z,17Z)-eicosapentaenoate + 2 glutathione = (12S)-hydroxy-(5Z,8Z,10E,14Z,17Z)-eicosapentaenoate + glutathione disulfide + H2O. It carries out the reaction (15S)-hydroperoxy-(5Z,8Z,11Z,13E,17Z)-eicosapentaenoate + 2 glutathione = (15S)-hydroxy-(5Z,8Z,11Z,13E,17Z)-eicosapentaenoate + glutathione disulfide + H2O. The enzyme catalyses (15S)-hydroperoxy-(11Z,13E)-eicosadienoate + 2 glutathione = (15S)-hydroxy-(11Z,13E)-eicosadienoate + glutathione disulfide + H2O. It catalyses the reaction (17S)-hydroperoxy-(4Z,7Z,10Z,13Z,15E,19Z)-docosahexaenoate + 2 glutathione = (17S)-hydroxy-(4Z,7Z,10Z,13Z,15E,19Z)-docosahexaenoate + glutathione disulfide + H2O. The catalysed reaction is a hydroperoxy-1,2-diacyl-glycero-3-phosphocholine + 2 glutathione = a hydroxy-1,2-diacyl-glycero-3-phosphocholine + glutathione disulfide + H2O. Essential antioxidant peroxidase that directly reduces phospholipid hydroperoxide even if they are incorporated in membranes and lipoproteins. Can also reduce fatty acid hydroperoxide, cholesterol hydroperoxide and thymine hydroperoxide. Plays a key role in protecting cells from oxidative damage by preventing membrane lipid peroxidation. Required to prevent cells from ferroptosis, a non-apoptotic cell death resulting from an iron-dependent accumulation of lipid reactive oxygen species. The presence of selenocysteine (Sec) versus Cys at the active site is essential for life: it provides resistance to overoxidation and prevents cells against ferroptosis. The presence of Sec at the active site is also essential for the survival of a specific type of parvalbumin-positive interneurons, thereby preventing against fatal epileptic seizures. May be required to protect cells from the toxicity of ingested lipid hydroperoxides. Required for normal sperm development and male fertility. Essential for maturation and survival of photoreceptor cells. Plays a role in a primary T-cell response to viral and parasitic infection by protecting T-cells from ferroptosis and by supporting T-cell expansion. Plays a role of glutathione peroxidase in platelets in the arachidonic acid metabolism. Reduces hydroperoxy ester lipids formed by a 15-lipoxygenase that may play a role as down-regulator of the cellular 15-lipoxygenase pathway. Can also reduce small soluble hydroperoxides such as H2O2, cumene hydroperoxide and tert-butyl hydroperoxide. Its function is as follows. Specifically able to suppress the production of leukotriene and prostaglandin in response to several stimuli by reducing fatty acid hydroperoxide. Functionally, specifically required to prevent mitochondrial cell death by mediating reduction of cardiolipin hydroperoxide. Also required for normal sperm development and male fertility. In terms of biological role, required for male fertility by stabilizing the condensed chromatin in sperm nuclei. This is Phospholipid hydroperoxide glutathione peroxidase from Rattus norvegicus (Rat).